The sequence spans 94 residues: Co-chaperonin GroES (94 aa).

It belongs to the GroES chaperonin family. Heptamer of 7 subunits arranged in a ring. Interacts with the chaperonin GroEL.

The protein localises to the cytoplasm. In terms of biological role, together with the chaperonin GroEL, plays an essential role in assisting protein folding. The GroEL-GroES system forms a nano-cage that allows encapsulation of the non-native substrate proteins and provides a physical environment optimized to promote and accelerate protein folding. GroES binds to the apical surface of the GroEL ring, thereby capping the opening of the GroEL channel. The chain is Co-chaperonin GroES from Clostridium kluyveri (strain NBRC 12016).